A 220-amino-acid chain; its full sequence is MKELTMLSLSFFFVSALLAAAANPLLSAADSAPNPVLDIDGEKLRTGTNYYIVPVLRDHGGGLTVSATTPNGTFVCPPRVVQTRKEVDHDRPLAFFPENPKEDVVRVSTDLNINFSAFMPCRWTSSTVWRLDKYDESTGQYFVTIGGVKGNPGPETISSWFKIEEFCGSGFYKLVFCPTVCGSCKVKCGDVGIYIDQKGRRRLALSDKPFAFEFNKTVYF.

Positions 1-29 (MKELTMLSLSFFFVSALLAAAANPLLSAA) are cleaved as a signal peptide. Asn-71 carries N-linked (GlcNAc...) asparagine glycosylation. 3 cysteine pairs are disulfide-bonded: Cys-76–Cys-121, Cys-177–Cys-188, and Cys-181–Cys-184. N-linked (GlcNAc...) asparagine glycosylation is present at Asn-215.

It belongs to the protease inhibitor I3 (leguminous Kunitz-type inhibitor) family. As to quaternary structure, homotetramer; dimer of homodimer. Glycosylated; contains as much as 13,9% of sugars (glucosamine, mannose, galactose, xylose, and fucose). As to expression, expressed in fruit pulp after pollination. Not expressed in seeds, stems or leaves.

Functionally, miraculin has the property of modifying a sour taste into a sweet taste. This alteration of taste perception persists for many minutes. In Synsepalum dulcificum (Miracle fruit), this protein is Miraculin.